The chain runs to 430 residues: Methylenetetrahydrofolate--tRNA-(uracil-5-)-methyltransferase TrmFO (430 aa).

9-14 serves as a coordination point for FAD; that stretch reads GAGLAG.

Belongs to the MnmG family. TrmFO subfamily. The cofactor is FAD.

It localises to the cytoplasm. It carries out the reaction uridine(54) in tRNA + (6R)-5,10-methylene-5,6,7,8-tetrahydrofolate + NADH + H(+) = 5-methyluridine(54) in tRNA + (6S)-5,6,7,8-tetrahydrofolate + NAD(+). It catalyses the reaction uridine(54) in tRNA + (6R)-5,10-methylene-5,6,7,8-tetrahydrofolate + NADPH + H(+) = 5-methyluridine(54) in tRNA + (6S)-5,6,7,8-tetrahydrofolate + NADP(+). Catalyzes the folate-dependent formation of 5-methyl-uridine at position 54 (M-5-U54) in all tRNAs. The chain is Methylenetetrahydrofolate--tRNA-(uracil-5-)-methyltransferase TrmFO from Fervidobacterium nodosum (strain ATCC 35602 / DSM 5306 / Rt17-B1).